A 479-amino-acid chain; its full sequence is Odorant receptor coreceptor (479 aa).

Residues 1-43 (MMKMKQQGLVADLLPNIRVMKFFGHFVFNYYDDNSSKYLHKIF) are Cytoplasmic-facing. Residues 44–64 (CCVNLFLLLLQFALCAVNLII) form a helical membrane-spanning segment. Topologically, residues 65 to 73 (ESADVDDLT) are extracellular. Residues 74-94 (ANTITLLFFTHSIVKIIYFAV) form a helical membrane-spanning segment. At 95 to 133 (RSKYFYRTWAIWNNPNSHPLFAESNARYHAIALKKMRLL) the chain is on the cytoplasmic side. Residues 134-154 (LFLVGATTVLSAIAWTVLTFF) traverse the membrane as a helical segment. Residues 155–190 (EHPIRKLVDPVTNETTIIELPQLLLRSYYPFDASKG) are Extracellular-facing. An N-linked (GlcNAc...) asparagine glycan is attached at Asn-167. A helical membrane pass occupies residues 191–211 (IMHVIVLIYQFYWVLFMLIDA). Residues 212–350 (NSLDVLFCSW…IVRLVTAVGD (139 aa)) lie on the Cytoplasmic side of the membrane. Positions 261–280 (SAEHLRESENQPPPPVPPQG) are disordered. Residues 351–371 (AYGFALLLHMLTTTITLTLLA) form a helical membrane-spanning segment. The Extracellular portion of the chain corresponds to 372 to 383 (YQATKVNGVNVY). A helical transmembrane segment spans residues 384-404 (AASTIGYIIYTFGQVFLFCIF). Residues 405-455 (GNRLIEESTSVMEAAYSCHWYDGSEEAKTFVQIVCQQCQKAMSISGAKFFT) are Cytoplasmic-facing. Residues 456–476 (VSLDLFASVLGAVVTYFMVLV) form a helical membrane-spanning segment. Topologically, residues 477 to 479 (QLK) are extracellular.

It belongs to the insect chemoreceptor superfamily. Heteromeric odorant receptor channel (TC 1.A.69) family. Orco subfamily. Heterodimer with conventional odorant receptors (ORs).

The protein localises to the cell membrane. In terms of biological role, odorant coreceptor which complexes with conventional odorant receptors (ORs) to form odorant-sensing units, providing sensitive and prolonged odorant signaling and calcium permeability. Obligate coreceptor of all odorant receptors. Orco is a universal and integral part of the functional odorant receptor, involved in the dendritic localization of other olfactory receptors. Can form functional ion channels in the absence of an odor-binding odorant receptor. Plays a central role in the perception of olfactory stimuli in ants and is essential for ant social organization. Required for pheromone sensing and mating behavior. Also required for the development and maintenance of odorant receptor neurons (ORNs) and of antennal lobe glomeruli. The polypeptide is Odorant receptor coreceptor (Harpegnathos saltator (Jerdon's jumping ant)).